Reading from the N-terminus, the 404-residue chain is Cysteine desulfurase IscS (404 aa).

Pyridoxal 5'-phosphate is bound by residues 75–76 (AT), Asn-155, Gln-183, and 203–205 (SAH). Lys-206 carries the N6-(pyridoxal phosphate)lysine modification. Thr-243 lines the pyridoxal 5'-phosphate pocket. Cys-328 serves as the catalytic Cysteine persulfide intermediate. A [2Fe-2S] cluster-binding site is contributed by Cys-328.

This sequence belongs to the class-V pyridoxal-phosphate-dependent aminotransferase family. NifS/IscS subfamily. As to quaternary structure, homodimer. Forms a heterotetramer with IscU, interacts with other sulfur acceptors. Requires pyridoxal 5'-phosphate as cofactor.

It is found in the cytoplasm. It catalyses the reaction (sulfur carrier)-H + L-cysteine = (sulfur carrier)-SH + L-alanine. Its pathway is cofactor biosynthesis; iron-sulfur cluster biosynthesis. Master enzyme that delivers sulfur to a number of partners involved in Fe-S cluster assembly, tRNA modification or cofactor biosynthesis. Catalyzes the removal of elemental sulfur atoms from cysteine to produce alanine. Functions as a sulfur delivery protein for Fe-S cluster synthesis onto IscU, an Fe-S scaffold assembly protein, as well as other S acceptor proteins. The protein is Cysteine desulfurase IscS of Shewanella piezotolerans (strain WP3 / JCM 13877).